The sequence spans 448 residues: Chromosomal replication initiator protein DnaA (448 aa).

The segment at 1-73 (MSTHLTETWE…VNALKLLTSK (73 aa)) is domain I, interacts with DnaA modulators. Positions 73 to 109 (KKYNIDFIVTTEEKIEENEKNHNNEKSNIVVNDEMST) are domain II. The tract at residues 110 to 326 (MLNPKYTFDS…GALIRIVAFS (217 aa)) is domain III, AAA+ region. Positions 154, 156, 157, and 158 each coordinate ATP. Positions 327 to 448 (SLTNKEISVD…NELNKRINQK (122 aa)) are domain IV, binds dsDNA.

Belongs to the DnaA family. As to quaternary structure, oligomerizes as a right-handed, spiral filament on DNA at oriC.

It is found in the cytoplasm. In terms of biological role, plays an essential role in the initiation and regulation of chromosomal replication. ATP-DnaA binds to the origin of replication (oriC) to initiate formation of the DNA replication initiation complex once per cell cycle. Binds the DnaA box (a 9 base pair repeat at the origin) and separates the double-stranded (ds)DNA. Forms a right-handed helical filament on oriC DNA; dsDNA binds to the exterior of the filament while single-stranded (ss)DNA is stabiized in the filament's interior. The ATP-DnaA-oriC complex binds and stabilizes one strand of the AT-rich DNA unwinding element (DUE), permitting loading of DNA polymerase. After initiation quickly degrades to an ADP-DnaA complex that is not apt for DNA replication. Binds acidic phospholipids. The protein is Chromosomal replication initiator protein DnaA of Clostridium botulinum (strain 657 / Type Ba4).